The following is a 602-amino-acid chain: MPRMTQLDLIRNFSIVAHIDHGKSTLADRLIQLTGTVAERDMKAQILDSMEIERERGITIKANTVRIDYPAKDGRTYVLNLIDTPGHVDFAYEVSRSMRAVEGSLLVVDASQGVEAQTLANVYQALDAGHEIVPVLNKIDLPAAEPERVKSQIEDVIGLDASDAVLISAKSGLGIPDVLEAIVHRLPPPKGDREAPLKAMLVDSWYDAYLGVVVMIRVMDGVIRKGDRVKMMQTGAVYGIDRLAVLKPQMVDIAELGPGEIGVLTASIKQVRDTRVGDTITHEKKGCAAPLPGFKPAQPVVFCGLFPVDANDFEALREAIEKLALNDASFTYEMETSAALGFGFRCGFLGLLHLEVVRDRLEREYDLDLITTAPSVVYQIYMKDGTLQELHNPTDMPDLTYVDHIEEPRIRATIMVPDEYLGDVLKLCQDRRGIQLDLSYAGARAMVVYDLPLNEVVFDFYDRLKSVTKGYASFDYQITGYREDFLVKMSILVNDEPVDALSMMVHRDRADMRGRAMVEKLKELIPRHMFKIPIQAAIGGRVIARETISAMRKDVTAKCYGGDATRKRKLLDKQKAGKKKMRQFGKVEIPQQAFINALKMDS.

The region spanning 8–190 is the tr-type G domain; the sequence is DLIRNFSIVA…AIVHRLPPPK (183 aa). GTP-binding positions include 20 to 25 and 137 to 140; these read DHGKST and NKID.

Belongs to the TRAFAC class translation factor GTPase superfamily. Classic translation factor GTPase family. LepA subfamily.

Its subcellular location is the cell inner membrane. The catalysed reaction is GTP + H2O = GDP + phosphate + H(+). Its function is as follows. Required for accurate and efficient protein synthesis under certain stress conditions. May act as a fidelity factor of the translation reaction, by catalyzing a one-codon backward translocation of tRNAs on improperly translocated ribosomes. Back-translocation proceeds from a post-translocation (POST) complex to a pre-translocation (PRE) complex, thus giving elongation factor G a second chance to translocate the tRNAs correctly. Binds to ribosomes in a GTP-dependent manner. The chain is Elongation factor 4 from Cereibacter sphaeroides (strain ATCC 17029 / ATH 2.4.9) (Rhodobacter sphaeroides).